Reading from the N-terminus, the 278-residue chain is Large ribosomal subunit protein uL2 (278 aa).

Residues 222-264 are disordered; that stretch reads GVAMNPIDHPHGGGEGRTSGGRHPVTPWGKPTKGRKTRKNKAT.

The protein belongs to the universal ribosomal protein uL2 family. In terms of assembly, part of the 50S ribosomal subunit. Forms a bridge to the 30S subunit in the 70S ribosome.

Functionally, one of the primary rRNA binding proteins. Required for association of the 30S and 50S subunits to form the 70S ribosome, for tRNA binding and peptide bond formation. It has been suggested to have peptidyltransferase activity; this is somewhat controversial. Makes several contacts with the 16S rRNA in the 70S ribosome. The sequence is that of Large ribosomal subunit protein uL2 from Phenylobacterium zucineum (strain HLK1).